The primary structure comprises 178 residues: MEQFHGTTIVSVRRGDKVALGGDGQVTLGNIVMKGGARKVRRIYNNQVLVGFAGGTADAFSLLDRFEAKLEKHQGNLTRAAVELAKDWRTDRMLRRLEAMLITADATTTLVITGNGDVLDPEEGICAIGSGGAYAQAAARALAENTELSPREIVEKSLEIAGDMCIYTNHNRIIETIE.

Residue threonine 7 is part of the active site. Positions 162, 165, and 168 each coordinate Na(+).

Belongs to the peptidase T1B family. HslV subfamily. A double ring-shaped homohexamer of HslV is capped on each side by a ring-shaped HslU homohexamer. The assembly of the HslU/HslV complex is dependent on binding of ATP.

It is found in the cytoplasm. It carries out the reaction ATP-dependent cleavage of peptide bonds with broad specificity.. Its activity is regulated as follows. Allosterically activated by HslU binding. In terms of biological role, protease subunit of a proteasome-like degradation complex believed to be a general protein degrading machinery. The polypeptide is ATP-dependent protease subunit HslV (Burkholderia lata (strain ATCC 17760 / DSM 23089 / LMG 22485 / NCIMB 9086 / R18194 / 383)).